A 223-amino-acid chain; its full sequence is RNA-free ribonuclease P (223 aa).

Belongs to the HARP family.

The catalysed reaction is Endonucleolytic cleavage of RNA, removing 5'-extranucleotides from tRNA precursor.. Its function is as follows. RNA-free RNase P that catalyzes the removal of the 5'-leader sequence from pre-tRNA to produce the mature 5'-terminus. The polypeptide is RNA-free ribonuclease P (Methanococcus vannielii (strain ATCC 35089 / DSM 1224 / JCM 13029 / OCM 148 / SB)).